Here is a 304-residue protein sequence, read N- to C-terminus: MPDTDKGAKPQDDSRLERARILSEALPFMQRYDKRTVVVKYGGHAMGDEELGAEFARDIVLLKQAGLNPIVVHGGGPQIGAMLNRLGIKSEFSGGLRITDKATVEIVEMVLAGSINKQIVAQLNQAGGRAVGLCGKDGNLVVARKVHQKVHDPESNIEKLLDLGFVGEPEKINPEILDVIQKSDIIPVIAPVGVSRDGHTYNINADTVAGAIAAAMGAARLLLLTDVTGVLGKDGKLIEALTVAEAKALMKDGTISGGMIPKLETCIESVEGGVEAVVILDGRVRHAVLLELFTELGAGTLIQK.

Residues 75 to 76 (GG), Arg97, and Asn202 contribute to the substrate site.

It belongs to the acetylglutamate kinase family. ArgB subfamily.

Its subcellular location is the cytoplasm. It carries out the reaction N-acetyl-L-glutamate + ATP = N-acetyl-L-glutamyl 5-phosphate + ADP. Its pathway is amino-acid biosynthesis; L-arginine biosynthesis; N(2)-acetyl-L-ornithine from L-glutamate: step 2/4. In terms of biological role, catalyzes the ATP-dependent phosphorylation of N-acetyl-L-glutamate. The sequence is that of Acetylglutamate kinase from Parvibaculum lavamentivorans (strain DS-1 / DSM 13023 / NCIMB 13966).